We begin with the raw amino-acid sequence, 345 residues long: DNA-directed RNA polymerases I and III subunit rpac1 (345 aa).

Positions 1-11 (MVNKSTTNGVS) are enriched in polar residues. The interval 1-20 (MVNKSTTNGVSDPNLENKRT) is disordered.

The protein belongs to the archaeal Rpo3/eukaryotic RPB3 RNA polymerase subunit family. Component of the RNA polymerase I (Pol I) and RNA polymerase III (Pol III) complexes consisting of at least 13 and 17 subunits, respectively. Interacts with RPAC19/RPAC2.

The protein resides in the nucleus. Functionally, DNA-dependent RNA polymerase catalyzes the transcription of DNA into RNA using the four ribonucleoside triphosphates as substrates. Common component of RNA polymerases I and III which synthesize ribosomal RNA precursors and small RNAs, such as 5S rRNA and tRNAs, respectively. RPAC1 is part of the Pol core element with the central large cleft and probably a clamp element that moves to open and close the cleft. The chain is DNA-directed RNA polymerases I and III subunit rpac1 (polr1c) from Dictyostelium discoideum (Social amoeba).